A 237-amino-acid polypeptide reads, in one-letter code: Protein GrpE (237 aa).

Disordered regions lie at residues 24–56 (LILE…KQLQ) and 204–237 (SAGS…PQPS).

The protein belongs to the GrpE family. In terms of assembly, homodimer.

Its subcellular location is the cytoplasm. In terms of biological role, participates actively in the response to hyperosmotic and heat shock by preventing the aggregation of stress-denatured proteins, in association with DnaK and GrpE. It is the nucleotide exchange factor for DnaK and may function as a thermosensor. Unfolded proteins bind initially to DnaJ; upon interaction with the DnaJ-bound protein, DnaK hydrolyzes its bound ATP, resulting in the formation of a stable complex. GrpE releases ADP from DnaK; ATP binding to DnaK triggers the release of the substrate protein, thus completing the reaction cycle. Several rounds of ATP-dependent interactions between DnaJ, DnaK and GrpE are required for fully efficient folding. This chain is Protein GrpE, found in Synechococcus sp. (strain JA-2-3B'a(2-13)) (Cyanobacteria bacterium Yellowstone B-Prime).